The chain runs to 487 residues: 3-octaprenyl-4-hydroxybenzoate carboxy-lyase (487 aa).

A Mn(2+)-binding site is contributed by asparagine 172. Residues 175–177 (IYR), 189–191 (RWL), and 194–195 (RG) contribute to the prenylated FMN site. Residue glutamate 238 coordinates Mn(2+). Aspartate 287 (proton donor) is an active-site residue.

The protein belongs to the UbiD family. As to quaternary structure, homohexamer. It depends on prenylated FMN as a cofactor. Mn(2+) serves as cofactor.

Its subcellular location is the cell membrane. It carries out the reaction a 4-hydroxy-3-(all-trans-polyprenyl)benzoate + H(+) = a 2-(all-trans-polyprenyl)phenol + CO2. It participates in cofactor biosynthesis; ubiquinone biosynthesis. In terms of biological role, catalyzes the decarboxylation of 3-octaprenyl-4-hydroxy benzoate to 2-octaprenylphenol, an intermediate step in ubiquinone biosynthesis. The protein is 3-octaprenyl-4-hydroxybenzoate carboxy-lyase of Nitrosomonas eutropha (strain DSM 101675 / C91 / Nm57).